A 590-amino-acid polypeptide reads, in one-letter code: Neuronal PAS domain-containing protein 1 (590 aa).

The region spanning 45–98 (QRKEKSRNAARSRRGKENLEFFELAKLLPLPGAISSQLDKASIVRLSVTYLRLR) is the bHLH domain. In terms of domain architecture, PAS 1 spans 135–207 (EQHLGGHILQ…LGLRTPTPGP (73 aa)). The segment at 198–229 (LGLRTPTPGPPTPPSVSSSSSSSSSLADTPEI) is disordered. Over residues 212–222 (SVSSSSSSSSS) the composition is skewed to low complexity. The 67-residue stretch at 293 to 359 (APLAELPLHG…IRQSHVDLLD (67 aa)) folds into the PAS 2 domain. One can recognise a PAC domain in the interval 365 to 408 (TGYYRWLQRAGGFVWLQSVATVAGSGKSPGEHHVLWVSHVLSQA). The tract at residues 425-494 (ACEEASSPGP…SHPATPRPEF (70 aa)) is disordered. Over residues 433–442 (GPEPTEPEPP) the composition is skewed to pro residues. Basic and acidic residues predominate over residues 463–476 (IKVEPGPRETKGSE).

In terms of assembly, efficient DNA binding requires dimerization with another bHLH protein. Interacts with ARNT; forms a heterodimer that binds core DNA sequence 5'-[AG]CGTG-3' within the hypoxia response element (HRE) leading to a transcriptional repressor on its target gene TH.

The protein localises to the nucleus. Functionally, may control regulatory pathways relevant to schizophrenia and to psychotic illness. May play a role in late central nervous system development by modulating EPO expression in response to cellular oxygen level. Forms a heterodimer that binds core DNA sequence 5'-TACGTG-3' within the hypoxia response element (HRE) leading to transcriptional repression on its target gene TH. This chain is Neuronal PAS domain-containing protein 1 (NPAS1), found in Homo sapiens (Human).